The chain runs to 561 residues: Transmembrane protein 151B (561 aa).

Over residues 1–10 the composition is skewed to low complexity; it reads MSPPGSAAGE. Residues 1-42 are disordered; sequence MSPPGSAAGESAGGGGGGGGSGVPEEPMASADEGPAREEQRP. Over residues 11-22 the composition is skewed to gly residues; sequence SAGGGGGGGGSG. Transmembrane regions (helical) follow at residues 59-79 and 106-126; these read CLLL…CHVT and YVYI…VECW. Positions 489-507 are enriched in polar residues; that stretch reads VNEASCPTEQTRLSSQASM. Positions 489-523 are disordered; the sequence is VNEASCPTEQTRLSSQASMRDNEEDEDEEEAGPPP. Residues 510 to 519 are compositionally biased toward acidic residues; sequence NEEDEDEEEA.

The protein belongs to the TMEM151 family.

The protein localises to the membrane. This Mus musculus (Mouse) protein is Transmembrane protein 151B (Tmem151b).